The following is a 130-amino-acid chain: Classical arabinogalactan protein 7 (130 aa).

Positions methionine 1–alanine 21 are cleaved as a signal peptide. Pyrrolidone carboxylic acid is present on glutamine 22. A disordered region spans residues glutamine 22–alanine 108. Residues proline 24, proline 26, proline 28, proline 35, and proline 36 each carry the 4-hydroxyproline modification. O-linked (Ara...) hydroxyproline glycosylation is found at proline 24, proline 26, proline 28, proline 35, and proline 36. Residues threonine 33 to alanine 68 are compositionally biased toward pro residues. Asparagine 106 is lipidated: GPI-anchor amidated asparagine. Residues alanine 107–alanine 130 constitute a propeptide, removed in mature form.

The protein belongs to the classical AGP family. O-glycosylated on hydroxyprolines; noncontiguous hydroxylproline residues are glycosylated with arabinogalactan.

The protein resides in the cell membrane. Functionally, proteoglycan that seems to be implicated in diverse developmental roles such as differentiation, cell-cell recognition, embryogenesis and programmed cell death. The sequence is that of Classical arabinogalactan protein 7 (AGP7) from Arabidopsis thaliana (Mouse-ear cress).